Here is a 198-residue protein sequence, read N- to C-terminus: Holliday junction branch migration complex subunit RuvA (198 aa).

The interval 1–61 is domain I; the sequence is MILYRIGEII…EYQYATYAFK (61 aa). The segment at 62–139 is domain II; it reads DFKERLLFVD…KMISPKDAAK (78 aa). Residues 140–144 are flexible linker; that stretch reads INETT. A domain III region spans residues 144–198; it reads TNTLSEVKETLKMVGFKTKQIDGALSKISSTDDVEKMIEEAIKLMSTQNYESATA.

Belongs to the RuvA family. In terms of assembly, homotetramer. Forms an RuvA(8)-RuvB(12)-Holliday junction (HJ) complex. HJ DNA is sandwiched between 2 RuvA tetramers; dsDNA enters through RuvA and exits via RuvB. An RuvB hexamer assembles on each DNA strand where it exits the tetramer. Each RuvB hexamer is contacted by two RuvA subunits (via domain III) on 2 adjacent RuvB subunits; this complex drives branch migration. In the full resolvosome a probable DNA-RuvA(4)-RuvB(12)-RuvC(2) complex forms which resolves the HJ.

The protein localises to the cytoplasm. Functionally, the RuvA-RuvB-RuvC complex processes Holliday junction (HJ) DNA during genetic recombination and DNA repair, while the RuvA-RuvB complex plays an important role in the rescue of blocked DNA replication forks via replication fork reversal (RFR). RuvA specifically binds to HJ cruciform DNA, conferring on it an open structure. The RuvB hexamer acts as an ATP-dependent pump, pulling dsDNA into and through the RuvAB complex. HJ branch migration allows RuvC to scan DNA until it finds its consensus sequence, where it cleaves and resolves the cruciform DNA. This chain is Holliday junction branch migration complex subunit RuvA, found in Mycoplasmopsis agalactiae (strain NCTC 10123 / CIP 59.7 / PG2) (Mycoplasma agalactiae).